The sequence spans 230 residues: MTKLYKVLIIEDDFRVAQIQEQMVNDHPYFHVISTCRTGGEALDYLSEKAAALDLILLDVYIPDVKGLELLWAIREKFRDVDIMMVTAAKEVDTVQEALRGGIIDYLLKPVQKEVLHQRLDAYVQKRELFGERRQVSQEELDQLRQVQVRVQVGETPLPKGIDRLTLEKVVNALEEAETQGLTAMEGARLIGASRSTVRRYFEYLIHTKKAKAEVNYGDVGRPERRYFLC.

The region spanning 6 to 124 (KVLIIEDDFR…VLHQRLDAYV (119 aa)) is the Response regulatory domain. Aspartate 59 carries the post-translational modification 4-aspartylphosphate. A DNA-binding region (H-T-H motif) is located at residues 184–203 (AMEGARLIGASRSTVRRYFE).

Phosphorylated by CitS.

The protein resides in the cytoplasm. Member of the two-component regulatory system CitT/CitS. This Halalkalibacterium halodurans (strain ATCC BAA-125 / DSM 18197 / FERM 7344 / JCM 9153 / C-125) (Bacillus halodurans) protein is Transcriptional regulatory protein CitT (citT).